Reading from the N-terminus, the 518-residue chain is Putative cytochrome P450 CYP13A6 (518 aa).

Cysteine 463 contributes to the heme binding site.

It belongs to the cytochrome P450 family. Heme serves as cofactor.

Functionally, cytochromes P450 are a group of heme-thiolate monooxygenases. They oxidize a variety of structurally unrelated compounds, including steroids, fatty acids, and xenobiotics. In Caenorhabditis elegans, this protein is Putative cytochrome P450 CYP13A6 (cyp-13A6).